Consider the following 152-residue polypeptide: Large ribosomal subunit protein uL15 (152 aa).

Residues 18 to 37 form a disordered region; that stretch reads RVARGIGSGKGKTAGRGVKG. Residues 23-35 are compositionally biased toward gly residues; sequence IGSGKGKTAGRGV.

The protein belongs to the universal ribosomal protein uL15 family. In terms of assembly, part of the 50S ribosomal subunit.

Its function is as follows. Binds to the 23S rRNA. This chain is Large ribosomal subunit protein uL15, found in Rickettsia bellii (strain OSU 85-389).